Consider the following 291-residue polypeptide: G1/S-specific cyclin-D2 (291 aa).

Positions 261-291 (TRQQTQQRNSSKSVDELDQASTPTDVQDINL) are disordered. A compositionally biased stretch (polar residues) spans 279–291 (QASTPTDVQDINL). At T282 the chain carries Phosphothreonine.

It belongs to the cyclin family. Cyclin D subfamily. Interacts with the cdk4 and cdk6 protein kinases to form a serine/threonine kinase holoenzyme complex. The cyclin subunit imparts substrate specificity to the complex. In terms of processing, phosphorylation at Thr-282 by MAP kinases is required for ubiquitination and degradation by the DCX(AMBRA1) complex. Ubiquitinated by the DCX(AMBRA1) complex during the transition from G1 to S cell phase, leading to its degradation: ubiquitination is dependent on Thr-282 phosphorylation. The DCX(AMBRA1) complex represents the major regulator of CCND2 stability during the G1/S transition.

The protein resides in the nucleus. Its subcellular location is the cytoplasm. The protein localises to the nucleus membrane. Regulatory component of the cyclin D2-CDK4 (DC) complex that phosphorylates and inhibits members of the retinoblastoma (RB) protein family including RB1 and regulates the cell-cycle during G(1)/S transition. Phosphorylation of RB1 allows dissociation of the transcription factor E2F from the RB/E2F complex and the subsequent transcription of E2F target genes which are responsible for the progression through the G(1) phase. Hypophosphorylates RB1 in early G(1) phase. Cyclin D-CDK4 complexes are major integrators of various mitogenenic and antimitogenic signals. The polypeptide is G1/S-specific cyclin-D2 (ccnd2) (Xenopus laevis (African clawed frog)).